The primary structure comprises 509 residues: Serine/threonine protein kinase OSK4 (509 aa).

One can recognise a Protein kinase domain in the interval 17–269; sequence YNLGRTLGIG…IREIREHQWF (253 aa). ATP is bound by residues 23-31 and lysine 46; that span reads LGIGSFGKV. Residue aspartate 140 is the Proton acceptor of the active site. The 41-residue stretch at 290 to 330 folds into the UBA domain; the sequence is MIDEDTLQDVVNLGYEKDHVCESLRNRLQNEATVAYYLLLD. In terms of domain architecture, KA1 spans 460-508; the sequence is NGRLPAVIKFEIQLYKSRDEKYLLDMQRVTGPQLLFLDFCAAFLTKLRV.

Belongs to the protein kinase superfamily. Ser/Thr protein kinase family. In terms of assembly, interacts with HDR1. Strongly expressed in immature seeds. Mostly expressed in panicles, leaf sheaths and roots, and to a lower extent, in germinating seeds and leaf blades.

Its subcellular location is the nucleus. It carries out the reaction L-seryl-[protein] + ATP = O-phospho-L-seryl-[protein] + ADP + H(+). The catalysed reaction is L-threonyl-[protein] + ATP = O-phospho-L-threonyl-[protein] + ADP + H(+). Suppressor of flowering in long days (LD) via the that up-regulation of HD1 and the down-regulation of EHD1. Can phosphorylate HD1 in the presence of HDR1. The sequence is that of Serine/threonine protein kinase OSK4 from Oryza sativa subsp. indica (Rice).